A 328-amino-acid chain; its full sequence is uncharacterized protein (328 aa).

This sequence to the C-terminal of para-aminobenzoate synthase component I.

This is an uncharacterized protein from Haemophilus influenzae (strain ATCC 51907 / DSM 11121 / KW20 / Rd).